The primary structure comprises 93 residues: Small ribosomal subunit protein uS19 (93 aa).

The protein belongs to the universal ribosomal protein uS19 family.

Its function is as follows. Protein S19 forms a complex with S13 that binds strongly to the 16S ribosomal RNA. This Lacticaseibacillus paracasei (strain ATCC 334 / BCRC 17002 / CCUG 31169 / CIP 107868 / KCTC 3260 / NRRL B-441) (Lactobacillus paracasei) protein is Small ribosomal subunit protein uS19.